Reading from the N-terminus, the 48-residue chain is Cytochrome b559 subunit beta (48 aa).

The helical transmembrane segment at 23 to 39 threads the bilayer; sequence WLAVHALAIPTVFFLGA. Residue His-27 participates in heme binding.

Belongs to the PsbE/PsbF family. In terms of assembly, heterodimer of an alpha subunit and a beta subunit. PSII is composed of 1 copy each of membrane proteins PsbA, PsbB, PsbC, PsbD, PsbE, PsbF, PsbH, PsbI, PsbJ, PsbK, PsbL, PsbM, PsbT, PsbX, PsbY, Psb30/Ycf12, peripheral proteins PsbO, CyanoQ (PsbQ), PsbU, PsbV and a large number of cofactors. It forms dimeric complexes. It depends on heme b as a cofactor.

The protein localises to the cellular thylakoid membrane. Functionally, this b-type cytochrome is tightly associated with the reaction center of photosystem II (PSII). PSII is a light-driven water:plastoquinone oxidoreductase that uses light energy to abstract electrons from H(2)O, generating O(2) and a proton gradient subsequently used for ATP formation. It consists of a core antenna complex that captures photons, and an electron transfer chain that converts photonic excitation into a charge separation. The sequence is that of Cytochrome b559 subunit beta from Prochlorococcus marinus (strain SARG / CCMP1375 / SS120).